The primary structure comprises 425 residues: RNA polymerase sigma factor SigA (425 aa).

Positions 193-263 are sigma-70 factor domain-2; the sequence is MVQSNLRLVV…TRAIADQSRT (71 aa). Positions 217–220 match the Interaction with polymerase core subunit RpoC motif; sequence DLIQ. The interval 272-347 is sigma-70 factor domain-3; that stretch reads ETISRIKKTT…EADGETPEDE (76 aa). The sigma-70 factor domain-4 stretch occupies residues 360-413; the sequence is VLDTLSPRERDVLRLRYGLDDGRMKTLEEIGQIFNVTRERIRQIEAKALRKLRH. The H-T-H motif DNA-binding region spans 386-405; it reads LEEIGQIFNVTRERIRQIEA.

The protein belongs to the sigma-70 factor family. RpoD/SigA subfamily. Interacts transiently with the RNA polymerase catalytic core.

The protein resides in the cytoplasm. Its function is as follows. Sigma factors are initiation factors that promote the attachment of RNA polymerase to specific initiation sites and are then released. This sigma factor is the primary sigma factor during exponential growth. This chain is RNA polymerase sigma factor SigA, found in Synechocystis sp. (strain ATCC 27184 / PCC 6803 / Kazusa).